Here is a 251-residue protein sequence, read N- to C-terminus: Cell division protein ZapD (251 aa).

Belongs to the ZapD family. As to quaternary structure, interacts with FtsZ.

It localises to the cytoplasm. Its function is as follows. Cell division factor that enhances FtsZ-ring assembly. Directly interacts with FtsZ and promotes bundling of FtsZ protofilaments, with a reduction in FtsZ GTPase activity. In Azoarcus sp. (strain BH72), this protein is Cell division protein ZapD.